Reading from the N-terminus, the 918-residue chain is von Willebrand factor A domain-containing protein DDB_G0292016 (918 aa).

The region spanning 44–172 is the VIT domain; the sequence is KRCGLYSLKN…NVKVRVVISS (129 aa). The VWFA domain occupies 299 to 467; that stretch reads EFIFLIDCSG…NMEKQVMKLL (169 aa). The segment at 625–814 is disordered; it reads VDIMNQSPPI…PSAPSQQKSV (190 aa). The span at 650–690 shows a compositional bias: low complexity; that stretch reads ASGALSSSILSRKRSSSPSTATKRSSSSSFSSSYLSLSSSS. Positions 716-746 are enriched in acidic residues; the sequence is YESDGGDQSSEQDEEEEDDCDDFHEDLDEDL. Residues 752–774 show a composition bias toward basic and acidic residues; sequence DVDKKECEKECKKKDSSKVDLKV. The span at 777–814 shows a compositional bias: low complexity; the sequence is SKVPLPSRSPSVSKPTTTSLLSPSPKSAPSAPSQQKSV.

This chain is von Willebrand factor A domain-containing protein DDB_G0292016, found in Dictyostelium discoideum (Social amoeba).